A 290-amino-acid polypeptide reads, in one-letter code: TP53-target gene 5 protein (290 aa).

A compositionally biased stretch (basic residues) spans 1–13; sequence MSPSAKKRPKNSR. Disordered regions lie at residues 1-29 and 114-178; these read MSPSAKKRPKNSRVSKMQDEKLRDETEQP and KLES…RQPL. Composition is skewed to basic and acidic residues over residues 16–26, 114–130, and 138–167; these read KMQDEKLRDET, KLESTGDPKKKEYKEWK, and RNKEKTSLAAMPRKEKHIEPEVPRTSRDDS.

Interacts with p53/TP53. In terms of tissue distribution, highly expressed in heart, brain and small intestine. Less abundant in skeletal muscle, spleen, prostate, ovary and colon. A smaller transcript is expressed specifically in the testis.

Its subcellular location is the cytoplasm. It is found in the nucleus. May play a significant role in p53/TP53-mediating signaling pathway. This chain is TP53-target gene 5 protein (TP53TG5), found in Homo sapiens (Human).